Reading from the N-terminus, the 547-residue chain is MALSSFNLSSLLFLLFFTPSVFSYSYQPSLNPHETSATSFCKNTPYPDACFTSLKLSISINISPNILSFLLQTLQTALSEAGKLTDLLSGAGVSNNLVEGQRGSLQDCKDLHHITSSFLKRSISKIQDGVNDSRKLADARAYLSAALTNKITCLEGLESASGPLKPKLVTSFTTTYKHISNSLSALPKQRRTTNPKTGGNTKNRRLLGLFPDWVYKKDHRFLEDSSDGYDEYDPSESLVVAADGTGNFSTINEAISFAPNMSNDRVLIYVKEGVYDENIDIPIYKTNIVLIGDGSDVTFITGNRSVGDGWTTFRSATLAVSGEGFLARDIMITNTAGPEKHQAVALRVNADFVALYRCVIDGYQDTLYTHSFRQFYRECDIYGTIDYIFGNAAVVFQGCNIVSKLPMPGQFTVITAQSRDTQDEDTGISMQNCSILASEDLFNSSNKVKSYLGRPWREFSRTVVMESYIDEFIDGSGWSKWNGGEALDTLYYGEYNNNGPGSETVKRVNWPGFHIMGYEDAFNFTATEFITGDGWLGSTSFPYDNGI.

An N-terminal signal peptide occupies residues methionine 1–serine 23. The segment at asparagine 31–alanine 185 is pectinesterase inhibitor 12. N-linked (GlcNAc...) asparagine glycosylation is found at asparagine 131, asparagine 247, asparagine 260, and asparagine 303. The segment at serine 237–aspartate 533 is pectinesterase 12. Positions 312 and 342 each coordinate substrate. Residue aspartate 365 is the Proton donor; for pectinesterase activity of the active site. Residues cysteine 379 and cysteine 399 are joined by a disulfide bond. Aspartate 386 (nucleophile; for pectinesterase activity) is an active-site residue. Residues asparagine 432 and asparagine 443 are each glycosylated (N-linked (GlcNAc...) asparagine). Substrate is bound by residues arginine 454 and tryptophan 456. Asparagine 523 is a glycosylation site (N-linked (GlcNAc...) asparagine).

The protein in the N-terminal section; belongs to the PMEI family. It in the C-terminal section; belongs to the pectinesterase family. As to expression, expressed in siliques.

The protein localises to the secreted. Its subcellular location is the cell wall. It carries out the reaction [(1-&gt;4)-alpha-D-galacturonosyl methyl ester](n) + n H2O = [(1-&gt;4)-alpha-D-galacturonosyl](n) + n methanol + n H(+). Its pathway is glycan metabolism; pectin degradation; 2-dehydro-3-deoxy-D-gluconate from pectin: step 1/5. Functionally, acts in the modification of cell walls via demethylesterification of cell wall pectin. The protein is Probable pectinesterase/pectinesterase inhibitor 12 (PME12) of Arabidopsis thaliana (Mouse-ear cress).